We begin with the raw amino-acid sequence, 254 residues long: Pimeloyl-[acyl-carrier protein] methyl ester esterase (254 aa).

The AB hydrolase-1 domain occupies 14 to 242 (LVLLHGWGMN…ASHAPFISHP (229 aa)). Residues W20, 82–83 (SL), and 143–147 (FLAIQ) contribute to the substrate site. Residue S82 is the Nucleophile of the active site. Catalysis depends on residues D207 and H235. Position 235 (H235) interacts with substrate.

This sequence belongs to the AB hydrolase superfamily. Carboxylesterase BioH family. Monomer.

It is found in the cytoplasm. The enzyme catalyses 6-carboxyhexanoyl-[ACP] methyl ester + H2O = 6-carboxyhexanoyl-[ACP] + methanol + H(+). It participates in cofactor biosynthesis; biotin biosynthesis. Its function is as follows. The physiological role of BioH is to remove the methyl group introduced by BioC when the pimeloyl moiety is complete. It allows to synthesize pimeloyl-ACP via the fatty acid synthetic pathway through the hydrolysis of the ester bonds of pimeloyl-ACP esters. The polypeptide is Pimeloyl-[acyl-carrier protein] methyl ester esterase (Aeromonas salmonicida (strain A449)).